Here is a 578-residue protein sequence, read N- to C-terminus: Proline--tRNA ligase (578 aa).

It belongs to the class-II aminoacyl-tRNA synthetase family. ProS type 1 subfamily. Homodimer.

Its subcellular location is the cytoplasm. The enzyme catalyses tRNA(Pro) + L-proline + ATP = L-prolyl-tRNA(Pro) + AMP + diphosphate. Catalyzes the attachment of proline to tRNA(Pro) in a two-step reaction: proline is first activated by ATP to form Pro-AMP and then transferred to the acceptor end of tRNA(Pro). As ProRS can inadvertently accommodate and process non-cognate amino acids such as alanine and cysteine, to avoid such errors it has two additional distinct editing activities against alanine. One activity is designated as 'pretransfer' editing and involves the tRNA(Pro)-independent hydrolysis of activated Ala-AMP. The other activity is designated 'posttransfer' editing and involves deacylation of mischarged Ala-tRNA(Pro). The misacylated Cys-tRNA(Pro) is not edited by ProRS. This Burkholderia thailandensis (strain ATCC 700388 / DSM 13276 / CCUG 48851 / CIP 106301 / E264) protein is Proline--tRNA ligase.